A 341-amino-acid polypeptide reads, in one-letter code: MFVDKTLMITGGTGSFGNAVLSRFLKSDIINDIKEIRIFSRDEKKQEDMRIAFNNPKLKCYIGDVRNYKSIDEAMHGVDYVFHAAALKQVPTCEFYPMEAINTNVLGAENVLSAAINNKVTKVIVLSTDKAVYPINAMGLSKALMEKLAIAKARMRSPGETVLCVTRYGNVMASRGSVIPLFINQIKQGKELTITEPSMTRFLMSLVDSVDLVLYAFEHGHQGDIFVQKSPASTIEVLAKALQDIFDSKNEIRFIGTRHGEKHYESLVSSEEMAKADDLRDYYRIPMDGRDLNYAKYFVEGEKKVALLEDYTSHNTKRLNLEEVKELLLTLDYVQEELKNA.

It belongs to the polysaccharide synthase family.

The catalysed reaction is UDP-alpha-D-glucose = UDP-alpha-D-galactose. Its function is as follows. Epimerizes UDP-galactose to UDP-glucose. This Rickettsia massiliae (strain Mtu5) protein is UDP-glucose 4-epimerase (capD).